The sequence spans 195 residues: Protein GrpE (195 aa).

The span at 1 to 14 (MQEPHDQEPIEKQK) shows a compositional bias: basic and acidic residues. Residues 1 to 45 (MQEPHDQEPIEKQKLPGMDDVLETEHSGTVAGNTERAGEDAAPSL) are disordered.

Belongs to the GrpE family. Homodimer.

The protein resides in the cytoplasm. In terms of biological role, participates actively in the response to hyperosmotic and heat shock by preventing the aggregation of stress-denatured proteins, in association with DnaK and GrpE. It is the nucleotide exchange factor for DnaK and may function as a thermosensor. Unfolded proteins bind initially to DnaJ; upon interaction with the DnaJ-bound protein, DnaK hydrolyzes its bound ATP, resulting in the formation of a stable complex. GrpE releases ADP from DnaK; ATP binding to DnaK triggers the release of the substrate protein, thus completing the reaction cycle. Several rounds of ATP-dependent interactions between DnaJ, DnaK and GrpE are required for fully efficient folding. The protein is Protein GrpE of Nitrosomonas europaea (strain ATCC 19718 / CIP 103999 / KCTC 2705 / NBRC 14298).